Reading from the N-terminus, the 399-residue chain is Argininosuccinate synthase (399 aa).

9–17 (AYSGGLDTS) contributes to the ATP binding site. Tyrosine 85 is an L-citrulline binding site. Glycine 115 contributes to the ATP binding site. Residues threonine 117, asparagine 121, and aspartate 122 each contribute to the L-aspartate site. Asparagine 121 is a binding site for L-citrulline. The L-citrulline site is built by arginine 125, serine 173, glutamate 258, and tyrosine 270.

This sequence belongs to the argininosuccinate synthase family. Type 1 subfamily. Homotetramer.

It localises to the cytoplasm. It catalyses the reaction L-citrulline + L-aspartate + ATP = 2-(N(omega)-L-arginino)succinate + AMP + diphosphate + H(+). The protein operates within amino-acid biosynthesis; L-arginine biosynthesis; L-arginine from L-ornithine and carbamoyl phosphate: step 2/3. This Streptococcus uberis (strain ATCC BAA-854 / 0140J) protein is Argininosuccinate synthase.